The sequence spans 204 residues: Large ribosomal subunit protein uL4 (204 aa).

The interval 49–75 (TKGRSDVSGGGKKPWRQKGRGGARAGS) is disordered.

This sequence belongs to the universal ribosomal protein uL4 family. Part of the 50S ribosomal subunit.

One of the primary rRNA binding proteins, this protein initially binds near the 5'-end of the 23S rRNA. It is important during the early stages of 50S assembly. It makes multiple contacts with different domains of the 23S rRNA in the assembled 50S subunit and ribosome. Its function is as follows. Forms part of the polypeptide exit tunnel. The sequence is that of Large ribosomal subunit protein uL4 from Campylobacter jejuni (strain RM1221).